The chain runs to 316 residues: Probable protein-L-isoaspartate O-methyltransferase (316 aa).

S-adenosyl-L-homocysteine contacts are provided by residues 103–106 (ATIS), His111, Ser136, 157–158 (EH), 187–188 (DG), Thr263, and Gln268. Ser106 is a catalytic residue.

The protein belongs to the methyltransferase superfamily. L-isoaspartyl/D-aspartyl protein methyltransferase family.

The protein localises to the cytoplasm. It localises to the cytosol. The enzyme catalyses [protein]-L-isoaspartate + S-adenosyl-L-methionine = [protein]-L-isoaspartate alpha-methyl ester + S-adenosyl-L-homocysteine. Functionally, initiates the repair of damaged proteins by catalyzing methyl esterification of L-isoaspartyl and D-aspartyl residues produced by spontaneous isomerization and racemization of L-aspartyl and L-asparaginyl residues in aging peptides and proteins. The protein is Probable protein-L-isoaspartate O-methyltransferase (pcmA) of Dictyostelium discoideum (Social amoeba).